The primary structure comprises 147 residues: Cyanate hydratase (147 aa).

Active-site residues include R88, E91, and S114.

It belongs to the cyanase family.

The enzyme catalyses cyanate + hydrogencarbonate + 3 H(+) = NH4(+) + 2 CO2. Catalyzes the reaction of cyanate with bicarbonate to produce ammonia and carbon dioxide. The chain is Cyanate hydratase from Cupriavidus necator (strain ATCC 17699 / DSM 428 / KCTC 22496 / NCIMB 10442 / H16 / Stanier 337) (Ralstonia eutropha).